The chain runs to 485 residues: Membrane-bound lytic murein transglycosylase F (485 aa).

The signal sequence occupies residues 1-29 (MFAHTALRQRCAKWLLATGLFLLLGACVE). The segment at 30-267 (KPSTLERVKE…RLKDRYYGHV (238 aa)) is non-LT domain. The segment at 268–485 (DVLGYVGAYT…DKPADKSSPM (218 aa)) is LT domain. Glutamate 314 is an active-site residue. Residues 465-485 (EGNLHVPGVNKDKPADKSSPM) are disordered. Positions 474 to 485 (NKDKPADKSSPM) are enriched in basic and acidic residues.

In the N-terminal section; belongs to the bacterial solute-binding protein 3 family. This sequence in the C-terminal section; belongs to the transglycosylase Slt family.

Its subcellular location is the cell outer membrane. It carries out the reaction Exolytic cleavage of the (1-&gt;4)-beta-glycosidic linkage between N-acetylmuramic acid (MurNAc) and N-acetylglucosamine (GlcNAc) residues in peptidoglycan, from either the reducing or the non-reducing ends of the peptidoglycan chains, with concomitant formation of a 1,6-anhydrobond in the MurNAc residue.. Functionally, murein-degrading enzyme that degrades murein glycan strands and insoluble, high-molecular weight murein sacculi, with the concomitant formation of a 1,6-anhydromuramoyl product. Lytic transglycosylases (LTs) play an integral role in the metabolism of the peptidoglycan (PG) sacculus. Their lytic action creates space within the PG sacculus to allow for its expansion as well as for the insertion of various structures such as secretion systems and flagella. This chain is Membrane-bound lytic murein transglycosylase F, found in Pseudomonas putida (strain ATCC 700007 / DSM 6899 / JCM 31910 / BCRC 17059 / LMG 24140 / F1).